The sequence spans 367 residues: tRNA-specific 2-thiouridylase MnmA (367 aa).

Residues 7 to 14 (AMSGGVDS) and M33 each bind ATP. The Nucleophile role is filled by C108. An intrachain disulfide couples C108 to C200. ATP is bound at residue G132. The interval 150-152 (KDQ) is interaction with tRNA. C200 serves as the catalytic Cysteine persulfide intermediate. Residues 301 to 302 (RY) form an interaction with tRNA region.

It belongs to the MnmA/TRMU family.

The protein resides in the cytoplasm. It carries out the reaction S-sulfanyl-L-cysteinyl-[protein] + uridine(34) in tRNA + AH2 + ATP = 2-thiouridine(34) in tRNA + L-cysteinyl-[protein] + A + AMP + diphosphate + H(+). Catalyzes the 2-thiolation of uridine at the wobble position (U34) of tRNA, leading to the formation of s(2)U34. This Thermus thermophilus (strain ATCC BAA-163 / DSM 7039 / HB27) protein is tRNA-specific 2-thiouridylase MnmA.